The sequence spans 303 residues: Methionyl-tRNA formyltransferase (303 aa).

Serine 108 to proline 111 provides a ligand contact to (6S)-5,6,7,8-tetrahydrofolate.

The protein belongs to the Fmt family.

The enzyme catalyses L-methionyl-tRNA(fMet) + (6R)-10-formyltetrahydrofolate = N-formyl-L-methionyl-tRNA(fMet) + (6S)-5,6,7,8-tetrahydrofolate + H(+). Its function is as follows. Attaches a formyl group to the free amino group of methionyl-tRNA(fMet). The formyl group appears to play a dual role in the initiator identity of N-formylmethionyl-tRNA by promoting its recognition by IF2 and preventing the misappropriation of this tRNA by the elongation apparatus. The sequence is that of Methionyl-tRNA formyltransferase from Rickettsia peacockii (strain Rustic).